Reading from the N-terminus, the 98-residue chain is Small ribosomal subunit protein uS19 (98 aa).

The segment at 77-98 is disordered; the sequence is TRTYRGHAGGKAEKGGSAPKRK.

It belongs to the universal ribosomal protein uS19 family.

Functionally, protein S19 forms a complex with S13 that binds strongly to the 16S ribosomal RNA. The polypeptide is Small ribosomal subunit protein uS19 (Prosthecochloris aestuarii (strain DSM 271 / SK 413)).